The following is a 245-amino-acid chain: tRNA (guanine-N(1)-)-methyltransferase (245 aa).

Residues Gly-111 and Ile-131–Leu-136 each bind S-adenosyl-L-methionine.

The protein belongs to the RNA methyltransferase TrmD family. As to quaternary structure, homodimer.

The protein resides in the cytoplasm. The enzyme catalyses guanosine(37) in tRNA + S-adenosyl-L-methionine = N(1)-methylguanosine(37) in tRNA + S-adenosyl-L-homocysteine + H(+). Specifically methylates guanosine-37 in various tRNAs. This chain is tRNA (guanine-N(1)-)-methyltransferase, found in Caldicellulosiruptor saccharolyticus (strain ATCC 43494 / DSM 8903 / Tp8T 6331).